Consider the following 227-residue polypeptide: ATP-dependent dethiobiotin synthetase BioD (227 aa).

13-18 contacts ATP; that stretch reads DIGKTY. Position 17 (T17) interacts with Mg(2+). Residue K38 is part of the active site. Residue S42 participates in substrate binding. Residues D55, 116–119, and 179–180 each bind ATP; these read EGSG and NN. Positions 55 and 116 each coordinate Mg(2+).

Belongs to the dethiobiotin synthetase family. In terms of assembly, homodimer. Mg(2+) serves as cofactor.

Its subcellular location is the cytoplasm. The enzyme catalyses (7R,8S)-7,8-diammoniononanoate + CO2 + ATP = (4R,5S)-dethiobiotin + ADP + phosphate + 3 H(+). It participates in cofactor biosynthesis; biotin biosynthesis; biotin from 7,8-diaminononanoate: step 1/2. In terms of biological role, catalyzes a mechanistically unusual reaction, the ATP-dependent insertion of CO2 between the N7 and N8 nitrogen atoms of 7,8-diaminopelargonic acid (DAPA, also called 7,8-diammoniononanoate) to form a ureido ring. This is ATP-dependent dethiobiotin synthetase BioD from Clostridium botulinum (strain Alaska E43 / Type E3).